A 794-amino-acid chain; its full sequence is Zinc finger Y-chromosomal protein 1 (794 aa).

The Nuclear localization signal motif lies at 380-389; it reads TKQKLKKKRR. 13 consecutive C2H2-type zinc fingers follow at residues 411 to 433, 442 to 464, 477 to 499, 508 to 531, 537 to 559, 565 to 588, 594 to 616, 622 to 645, 651 to 673, 679 to 702, 708 to 730, 736 to 759, and 765 to 788; these read YPCM…MKNH, YRCT…LESH, LECE…KLTH, HICK…LAVH, HICV…MRTH, YLCQ…KTKH, FKCD…AILH, HQCL…ISVH, HKCE…EAAH, HQCR…LSVH, YRCK…MKTH, YQCE…ISIH, and HRCD…LKHH.

This sequence belongs to the krueppel C2H2-type zinc-finger protein family. ZFX/ZFY subfamily.

It is found in the nucleus. In terms of biological role, probable transcriptional activator. In Xenopus laevis (African clawed frog), this protein is Zinc finger Y-chromosomal protein 1 (zfy1).